Consider the following 98-residue polypeptide: NADH-ubiquinone oxidoreductase chain 4L (98 aa).

The next 3 helical transmembrane spans lie at 1-21, 29-49, and 61-81; these read MSMV…GLLM, SLLC…VTIL, and IILL…LVMV.

The protein belongs to the complex I subunit 4L family. Core subunit of respiratory chain NADH dehydrogenase (Complex I) which is composed of 45 different subunits.

Its subcellular location is the mitochondrion inner membrane. The enzyme catalyses a ubiquinone + NADH + 5 H(+)(in) = a ubiquinol + NAD(+) + 4 H(+)(out). Functionally, core subunit of the mitochondrial membrane respiratory chain NADH dehydrogenase (Complex I) which catalyzes electron transfer from NADH through the respiratory chain, using ubiquinone as an electron acceptor. Part of the enzyme membrane arm which is embedded in the lipid bilayer and involved in proton translocation. This is NADH-ubiquinone oxidoreductase chain 4L (MT-ND4L) from Erignathus barbatus (Bearded seal).